The sequence spans 54 residues: Potassium channel toxin alpha-KTx 14.2 (54 aa).

A signal peptide spans 1–23; the sequence is MKIFFAILLILAVCSMAIWTVNG. 3 cysteine pairs are disulfide-bonded: Cys30–Cys46, Cys36–Cys51, and Cys40–Cys53.

This sequence belongs to the short scorpion toxin superfamily. Potassium channel inhibitor family. Alpha-KTx 14 subfamily. As to expression, expressed by the venom gland.

It localises to the secreted. In terms of biological role, inhibits potassium channels. May be active towards small conductance calcium-activated potassium channels (KCNN, SK), and less active towards voltage-gated potassium channels (Kv/KCN). In Olivierus martensii (Manchurian scorpion), this protein is Potassium channel toxin alpha-KTx 14.2.